Here is a 211-residue protein sequence, read N- to C-terminus: Uridine kinase (211 aa).

Residue 12-19 (GGTGSGKT) participates in ATP binding.

This sequence belongs to the uridine kinase family.

Its subcellular location is the cytoplasm. It carries out the reaction uridine + ATP = UMP + ADP + H(+). The catalysed reaction is cytidine + ATP = CMP + ADP + H(+). Its pathway is pyrimidine metabolism; CTP biosynthesis via salvage pathway; CTP from cytidine: step 1/3. It participates in pyrimidine metabolism; UMP biosynthesis via salvage pathway; UMP from uridine: step 1/1. In Halalkalibacterium halodurans (strain ATCC BAA-125 / DSM 18197 / FERM 7344 / JCM 9153 / C-125) (Bacillus halodurans), this protein is Uridine kinase.